The chain runs to 513 residues: Maturase K (513 aa).

The protein belongs to the intron maturase 2 family. MatK subfamily.

The protein localises to the plastid. The protein resides in the chloroplast. Functionally, usually encoded in the trnK tRNA gene intron. Probably assists in splicing its own and other chloroplast group II introns. In Pinus resinosa (Red pine), this protein is Maturase K.